The chain runs to 421 residues: Myb-related protein Pp2 (421 aa).

2 consecutive HTH myb-type domains span residues 9–61 and 62–116; these read KVGL…TNYL and RPDL…KKRL. 2 DNA-binding regions (H-T-H motif) span residues 37-61 and 89-112; these read WRAI…TNYL and WSRI…NTRL. The interval 119-240 is disordered; the sequence is QGLDPNTHLP…VTTKSHEDHR (122 aa). The segment covering 136 to 147 has biased composition (acidic residues); it reads DTEDDTDDEGGD.

The protein localises to the nucleus. In terms of biological role, possible transcription activator. The chain is Myb-related protein Pp2 (PP2) from Physcomitrium patens (Spreading-leaved earth moss).